Reading from the N-terminus, the 118-residue chain is Small ribosomal subunit protein uS13 (118 aa).

The disordered stretch occupies residues 92 to 118 (RKGLPVRGQRTKTNARTRKGPRKPIRK).

It belongs to the universal ribosomal protein uS13 family. As to quaternary structure, part of the 30S ribosomal subunit. Forms a loose heterodimer with protein S19. Forms two bridges to the 50S subunit in the 70S ribosome.

Located at the top of the head of the 30S subunit, it contacts several helices of the 16S rRNA. In the 70S ribosome it contacts the 23S rRNA (bridge B1a) and protein L5 of the 50S subunit (bridge B1b), connecting the 2 subunits; these bridges are implicated in subunit movement. Contacts the tRNAs in the A and P-sites. The protein is Small ribosomal subunit protein uS13 of Pseudomonas putida (strain W619).